Reading from the N-terminus, the 247-residue chain is Ras-like protein family member 11B (247 aa).

The small GTPase-like stretch occupies residues 29–247; it reads ASSRVIKIAV…SAKVRTATSV (219 aa). Residues 40–47, 87–91, and 152–155 each bind GTP; these read GGSGVGKT, DTPGV, and NKAD. The tract at residues 205-228 is disordered; it reads QNTGTPERRKNSLIPRPKSPNMQD.

Belongs to the small GTPase superfamily. Ras family.

The enzyme catalyses GTP + H2O = GDP + phosphate + H(+). In Xenopus tropicalis (Western clawed frog), this protein is Ras-like protein family member 11B.